The primary structure comprises 387 residues: S-adenosylmethionine synthase (387 aa).

H17 lines the ATP pocket. D19 provides a ligand contact to Mg(2+). E45 contributes to the K(+) binding site. L-methionine-binding residues include E58 and Q101. Residues 101–111 (QSPDIAQGVDR) form a flexible loop region. ATP is bound by residues 168 to 170 (DAK), 234 to 235 (RF), D243, 249 to 250 (RK), A266, and K270. L-methionine is bound at residue D243. K274 is an L-methionine binding site.

This sequence belongs to the AdoMet synthase family. Homotetramer; dimer of dimers. Mg(2+) serves as cofactor. Requires K(+) as cofactor.

The protein resides in the cytoplasm. The catalysed reaction is L-methionine + ATP + H2O = S-adenosyl-L-methionine + phosphate + diphosphate. It functions in the pathway amino-acid biosynthesis; S-adenosyl-L-methionine biosynthesis; S-adenosyl-L-methionine from L-methionine: step 1/1. In terms of biological role, catalyzes the formation of S-adenosylmethionine (AdoMet) from methionine and ATP. The overall synthetic reaction is composed of two sequential steps, AdoMet formation and the subsequent tripolyphosphate hydrolysis which occurs prior to release of AdoMet from the enzyme. The chain is S-adenosylmethionine synthase from Bordetella petrii (strain ATCC BAA-461 / DSM 12804 / CCUG 43448).